The chain runs to 423 residues: Riboflavin biosynthesis protein RibBA (423 aa).

Residues 1-204 form a DHBP synthase region; that stretch reads MTRLDSVERA…IADLIEWRRK (204 aa). D-ribulose 5-phosphate contacts are provided by residues 28–29, aspartate 33, 141–145, and glutamate 165; these read RE and RPGHT. Position 29 (glutamate 29) interacts with Mg(2+). Histidine 144 is a binding site for Mg(2+). Residues 205–423 are GTP cyclohydrolase II; sequence HEKHIARVAE…AVPGEFGGAV (219 aa). GTP is bound at residue 259–263; it reads RVHSE. Zn(2+) is bound by residues cysteine 264, cysteine 275, and cysteine 277. GTP-binding positions include glutamine 280, 303 to 305, and threonine 325; that span reads EGR. The active-site Proton acceptor; for GTP cyclohydrolase activity is the aspartate 337. Arginine 339 (nucleophile; for GTP cyclohydrolase activity) is an active-site residue. Positions 360 and 365 each coordinate GTP.

The protein in the N-terminal section; belongs to the DHBP synthase family. This sequence in the C-terminal section; belongs to the GTP cyclohydrolase II family. Requires Mg(2+) as cofactor. The cofactor is Mn(2+). Zn(2+) serves as cofactor.

The enzyme catalyses D-ribulose 5-phosphate = (2S)-2-hydroxy-3-oxobutyl phosphate + formate + H(+). It carries out the reaction GTP + 4 H2O = 2,5-diamino-6-hydroxy-4-(5-phosphoribosylamino)-pyrimidine + formate + 2 phosphate + 3 H(+). It participates in cofactor biosynthesis; riboflavin biosynthesis; 2-hydroxy-3-oxobutyl phosphate from D-ribulose 5-phosphate: step 1/1. It functions in the pathway cofactor biosynthesis; riboflavin biosynthesis; 5-amino-6-(D-ribitylamino)uracil from GTP: step 1/4. In terms of biological role, catalyzes the conversion of D-ribulose 5-phosphate to formate and 3,4-dihydroxy-2-butanone 4-phosphate. Catalyzes the conversion of GTP to 2,5-diamino-6-ribosylamino-4(3H)-pyrimidinone 5'-phosphate (DARP), formate and pyrophosphate. This Mycolicibacterium gilvum (strain PYR-GCK) (Mycobacterium gilvum (strain PYR-GCK)) protein is Riboflavin biosynthesis protein RibBA.